Here is a 248-residue protein sequence, read N- to C-terminus: Mannose-binding protein C (248 aa).

The first 20 residues, 1–20 (MSLFPSLPLLLLSMVAASYS), serve as a signal peptide directing secretion. The Collagen-like domain occupies 42–99 (GINGFPGKDGRDGTKGEKGEPGQGLRGLQGPPGKLGPPGNPGPSGSPGPKGQKGDPGK). Residues 43–113 (INGFPGKDGR…DSSLAASERK (71 aa)) form a disordered region. Proline 47 carries the post-translational modification Hydroxyproline. Basic and acidic residues predominate over residues 49–61 (KDGRDGTKGEKGE). Hydroxyproline occurs at positions 73, 79, 82, and 88. Pro residues predominate over residues 75 to 87 (KLGPPGNPGPSGS). A compositionally biased stretch (basic and acidic residues) spans 93-102 (QKGDPGKSPD). Residues 112-130 (RKALQTEMARIKKWLTFSL) are a coiled coil. The 112-residue stretch at 134-245 (VGNKFFLTNG…CSTSHLAVCE (112 aa)) folds into the C-type lectin domain. Cystine bridges form between cysteine 155–cysteine 244 and cysteine 222–cysteine 236.

Oligomeric complex of 3 or more homotrimers. Interacts with MASP1 and MASP2. Interacts with MEP1A and MEP1B and may inhibit their catalytic activity. Interacts with CR1 (via Sushi 24 and Sushi 25 domains). In terms of assembly, (Microbial infection) Interacts with SARS coronavirus-2/SARS-CoV-2 Spike glycoprotein homotrimer; the interaction is calcium-dependent and modulated by Spike glycoprotein glycosylation state. As to expression, plasma protein produced mainly in the liver.

Its subcellular location is the secreted. Calcium-dependent lectin involved in innate immune defense. Binds mannose, fucose and N-acetylglucosamine on different microorganisms and activates the lectin complement pathway. Binds to late apoptotic cells, as well as to apoptotic blebs and to necrotic cells, but not to early apoptotic cells, facilitating their uptake by macrophages. May bind DNA. Upon SARS coronavirus-2/SARS-CoV-2 infection, activates the complement lectin pathway which leads to the inhibition SARS-CoV-2 infection and a reduction of the induced inflammatory response. This Homo sapiens (Human) protein is Mannose-binding protein C.